Reading from the N-terminus, the 218-residue chain is Small ribosomal subunit protein uS3 (218 aa).

A KH type-2 domain is found at 38 to 106; sequence IRKFIATKLA…RVHINIVEIK (69 aa).

This sequence belongs to the universal ribosomal protein uS3 family. As to quaternary structure, part of the 30S ribosomal subunit. Forms a tight complex with proteins S10 and S14.

Binds the lower part of the 30S subunit head. Binds mRNA in the 70S ribosome, positioning it for translation. This is Small ribosomal subunit protein uS3 from Enterococcus faecalis (strain ATCC 700802 / V583).